The following is a 423-amino-acid chain: F-box/LRR-repeat protein 2 (423 aa).

In terms of domain architecture, F-box spans 9-55 (GLINKKLPKELLLRIFSFLDIVTLCRCAQISKAWNILALDGSNWQRI). LRR repeat units lie at residues 61-87 (QTDVEGRVVENISKRCGGFLRKLSLRG), 88-113 (CIGVGDSSLKTFAQNCRNIEHLNLNG), 114-139 (CTKITDSTCYSLSRFCSKLKHLDLTS), 140-165 (CVSITNSSLKGISEGCRNLEYLNLSW), 166-191 (CDQITKDGIEALVRGCRGLKALLLRG), 192-217 (CTQLEDEALKHIQNYCHELVSLNLQS), 218-243 (CSRITDEGVVQICRGCHRLQALCLSG), 244-269 (CSNLTDASLTALGLNCPRLQILEAAR), 270-295 (CSHLTDAGFTLLARNCHELEKMDLEE), 296-321 (CILITDSTLIQLSIHCPKLQALSLSH), 322-350 (CELITDDGILHLSNSTCGHERLRVLELDN), 351-375 (CLLITDVALEHLENCRGLERLELYD), and 376-401 (CQQVTRAGIKRMRAQLPHVKVHAYFA). Residues 80–90 (LRKLSLRGCIG) form an interaction with Calmodulin region. Lys-201 is covalently cross-linked (Glycyl lysine isopeptide (Lys-Gly) (interchain with G-Cter in ubiquitin)). Thr-404 is modified (phosphothreonine). The S-geranylgeranyl cysteine moiety is linked to residue Cys-420. The CAAX motif signature appears at 420-423 (CVIL).

In terms of assembly, part of the SCF (SKP1-CUL1-F-box) E3 ubiquitin-protein ligase complex SCF(FBXL2) composed of CUL1, SKP1, RBX1 and FBXL2. Interacts with calmodulin; may antagonize substrate ubiquitination by SCF(FBXL2). May interact with PIK3R1. Interacts with PTPN13. As to quaternary structure, (Microbial infection) Interacts with hepatitis C virus non-structural protein 5A (NS5A) and less efficiently, with hepatitis C virus non-structural protein 5B (NS5B); a reaction crucial for hepatitis C virus RNA replication. In terms of processing, phosphorylated by GSK-beta (GSK3B), promoting recognition by FBXO3, leading to its ubiquitination by the SCF(FBXO3) complex. Post-translationally, ubiquitinated at Lys-201 by the SCF(FBXO3) complex in response to lipopolysaccharide (LPS), leading to its degradation by the proteasome. In terms of tissue distribution, expressed in brain, heart, kidney, liver, lung, pancreas and placenta.

It is found in the membrane. The protein operates within protein modification; protein ubiquitination. Calcium-activated substrate recognition component of the SCF (SKP1-cullin-F-box protein) E3 ubiquitin-protein ligase complex, SCF(FBXL2), which mediates the ubiquitination and subsequent proteasomal degradation of target proteins. Unlike many F-box proteins, FBXL2 does not seem to target phosphodegron within its substrates but rather calmodulin-binding motifs and is thereby antagonized by calmodulin. This is the case for the cyclins CCND2 and CCND3 which polyubiquitination and subsequent degradation are inhibited by calmodulin. Through CCND2 and CCND3 degradation induces cell-cycle arrest in G(0). SCF(FBXL2) also mediates PIK3R2 ubiquitination and proteasomal degradation thereby regulating phosphatidylinositol 3-kinase signaling and autophagy. PCYT1A monoubiquitination by SCF(FBXL2) and subsequent degradation regulates synthesis of phosphatidylcholine, which is utilized for formation of membranes and of pulmonary surfactant. The SCF(FBXL2) complex acts as a regulator of inflammation by mediating ubiquitination and degradation of TRAF proteins (TRAF1, TRAF2, TRAF3, TRAF4, TRAF5 and TRAF6). The SCF(FBXL2) complex acts as a negative regulator of the NLRP3 inflammasome by mediating ubiquitination and degradation of NLRP3. The protein is F-box/LRR-repeat protein 2 of Homo sapiens (Human).